Here is a 396-residue protein sequence, read N- to C-terminus: Argininosuccinate synthase (396 aa).

ATP is bound at residue 9–17 (AYSGGLDTS). Residue Tyr85 participates in L-citrulline binding. Gly115 contacts ATP. L-aspartate-binding residues include Thr117, Asn121, and Asp122. Asn121 serves as a coordination point for L-citrulline. L-citrulline-binding residues include Arg125, Ser173, Glu258, and Tyr270.

The protein belongs to the argininosuccinate synthase family. Type 1 subfamily. In terms of assembly, homotetramer.

The protein resides in the cytoplasm. It carries out the reaction L-citrulline + L-aspartate + ATP = 2-(N(omega)-L-arginino)succinate + AMP + diphosphate + H(+). It functions in the pathway amino-acid biosynthesis; L-arginine biosynthesis; L-arginine from L-ornithine and carbamoyl phosphate: step 2/3. This Streptococcus mutans serotype c (strain ATCC 700610 / UA159) protein is Argininosuccinate synthase.